A 225-amino-acid chain; its full sequence is Protein GrpE (225 aa).

The segment covering 1 to 15 (MSGDASTPEQDQNVV) has biased composition (polar residues). Disordered stretches follow at residues 1-48 (MSGD…DRMQ) and 198-225 (VSMGPGPSDPGSAPAEAAAAPDQTAEEA). The span at 201-225 (GPGPSDPGSAPAEAAAAPDQTAEEA) shows a compositional bias: low complexity.

It belongs to the GrpE family. In terms of assembly, homodimer.

It localises to the cytoplasm. In terms of biological role, participates actively in the response to hyperosmotic and heat shock by preventing the aggregation of stress-denatured proteins, in association with DnaK and GrpE. It is the nucleotide exchange factor for DnaK and may function as a thermosensor. Unfolded proteins bind initially to DnaJ; upon interaction with the DnaJ-bound protein, DnaK hydrolyzes its bound ATP, resulting in the formation of a stable complex. GrpE releases ADP from DnaK; ATP binding to DnaK triggers the release of the substrate protein, thus completing the reaction cycle. Several rounds of ATP-dependent interactions between DnaJ, DnaK and GrpE are required for fully efficient folding. This is Protein GrpE from Synechococcus sp. (strain CC9605).